Here is a 300-residue protein sequence, read N- to C-terminus: Protein N-terminal and lysine N-methyltransferase EFM7 (300 aa).

S-adenosyl-L-methionine contacts are provided by residues Trp-75, Gly-101–Gly-103, Asp-123, Trp-156, and Ser-179.

It belongs to the class I-like SAM-binding methyltransferase superfamily. EFM7 family.

Its subcellular location is the cytoplasm. Its function is as follows. S-adenosyl-L-methionine-dependent protein methyltransferase that trimethylates the N-terminal glycine 'Gly-2' of elongation factor 1-alpha, before also catalyzing the mono- and dimethylation of 'Lys-3'. This is Protein N-terminal and lysine N-methyltransferase EFM7 from Cryptococcus neoformans var. neoformans serotype D (strain JEC21 / ATCC MYA-565) (Filobasidiella neoformans).